The primary structure comprises 227 residues: Deoxyribose-phosphate aldolase (227 aa).

Catalysis depends on D96, which acts as the Proton donor/acceptor. Catalysis depends on K158, which acts as the Schiff-base intermediate with acetaldehyde. K187 functions as the Proton donor/acceptor in the catalytic mechanism.

It belongs to the DeoC/FbaB aldolase family. DeoC type 1 subfamily.

It is found in the cytoplasm. The catalysed reaction is 2-deoxy-D-ribose 5-phosphate = D-glyceraldehyde 3-phosphate + acetaldehyde. It participates in carbohydrate degradation; 2-deoxy-D-ribose 1-phosphate degradation; D-glyceraldehyde 3-phosphate and acetaldehyde from 2-deoxy-alpha-D-ribose 1-phosphate: step 2/2. Catalyzes a reversible aldol reaction between acetaldehyde and D-glyceraldehyde 3-phosphate to generate 2-deoxy-D-ribose 5-phosphate. This chain is Deoxyribose-phosphate aldolase, found in Desulfotalea psychrophila (strain LSv54 / DSM 12343).